The sequence spans 239 residues: Ribonuclease 3 (239 aa).

The region spanning 12 to 137 (RAKLEGLIGH…LIAAIYLDGG (126 aa)) is the RNase III domain. Glu-50 contacts Mg(2+). Asp-54 is an active-site residue. The Mg(2+) site is built by Asp-123 and Glu-126. The active site involves Glu-126. A DRBM domain is found at 162 to 231 (DAKTELQEWS…ATKMLEREGI (70 aa)).

It belongs to the ribonuclease III family. As to quaternary structure, homodimer. Mg(2+) serves as cofactor.

It localises to the cytoplasm. The enzyme catalyses Endonucleolytic cleavage to 5'-phosphomonoester.. Functionally, digests double-stranded RNA. Involved in the processing of primary rRNA transcript to yield the immediate precursors to the large and small rRNAs (23S and 16S). Processes some mRNAs, and tRNAs when they are encoded in the rRNA operon. Processes pre-crRNA and tracrRNA of type II CRISPR loci if present in the organism. The sequence is that of Ribonuclease 3 from Rhizobium johnstonii (strain DSM 114642 / LMG 32736 / 3841) (Rhizobium leguminosarum bv. viciae).